Here is a 160-residue protein sequence, read N- to C-terminus: Glyoxalase domain-containing protein 5 (160 aa).

The VOC domain occupies 37 to 157; that stretch reads RLDHIVMTVK…DRNLIEVSNY (121 aa).

The protein belongs to the glyoxalase I family.

The chain is Glyoxalase domain-containing protein 5 (GLOD5) from Homo sapiens (Human).